A 367-amino-acid chain; its full sequence is Leu/Ile/Val-binding protein (367 aa).

The N-terminal stretch at 1–23 (MNIKGKALLAGCIALAFSNMALA) is a signal peptide. A disulfide bridge connects residues cysteine 76 and cysteine 101.

It belongs to the leucine-binding protein family.

It is found in the periplasm. In terms of biological role, this protein is a component of the leucine, isoleucine, valine, (threonine) transport system, which is one of the two periplasmic binding protein-dependent transport systems of the high-affinity transport of the branched-chain amino acids. In Escherichia coli O157:H7, this protein is Leu/Ile/Val-binding protein (livJ).